The chain runs to 239 residues: Phosphothreonine lyase OspF (239 aa).

Histidine 104 acts as the Proton donor in catalysis. The Proton acceptor role is filled by lysine 134.

It belongs to the phosphothreonine lyase family.

The protein localises to the secreted. In terms of biological role, catalyzes the removal of the phosphate group from the phosphothreonine in the mitogen-activated protein kinases such as MAPK2/ERK2, MAPK3/ERK1, MAPK8 and MAPK14 in an irreversible reaction, thus preventing the downstream phosphorylation of histone H3. This epigenetic modification results in inhibition of the transcription of a specific subset of pro-inflammatory genes, and ultimately to a reduced immune response against the invading pathogen. The diminished immune response enhances the bacterium's ability to disseminate and multiply within the host. The protein is Phosphothreonine lyase OspF (ospF) of Shigella sonnei (strain Ss046).